A 196-amino-acid polypeptide reads, in one-letter code: Pyridoxal 5'-phosphate synthase subunit PdxT (196 aa).

47–49 (GES) contacts L-glutamine. C79 functions as the Nucleophile in the catalytic mechanism. L-glutamine is bound by residues R106 and 134–135 (IR). Catalysis depends on charge relay system residues H170 and E172.

This sequence belongs to the glutaminase PdxT/SNO family. As to quaternary structure, in the presence of PdxS, forms a dodecamer of heterodimers. Only shows activity in the heterodimer.

It carries out the reaction aldehydo-D-ribose 5-phosphate + D-glyceraldehyde 3-phosphate + L-glutamine = pyridoxal 5'-phosphate + L-glutamate + phosphate + 3 H2O + H(+). The catalysed reaction is L-glutamine + H2O = L-glutamate + NH4(+). The protein operates within cofactor biosynthesis; pyridoxal 5'-phosphate biosynthesis. In terms of biological role, catalyzes the hydrolysis of glutamine to glutamate and ammonia as part of the biosynthesis of pyridoxal 5'-phosphate. The resulting ammonia molecule is channeled to the active site of PdxS. The protein is Pyridoxal 5'-phosphate synthase subunit PdxT of Bacillus cytotoxicus (strain DSM 22905 / CIP 110041 / 391-98 / NVH 391-98).